The chain runs to 73 residues: uncharacterized protein (73 aa).

This is an uncharacterized protein from Homo sapiens (Human).